A 523-amino-acid chain; its full sequence is ATP-dependent RNA helicase DBP3 (523 aa).

Over residues 1-21 the composition is skewed to basic and acidic residues; sequence MTKEEIADKKRKVVDEEVIEK. The interval 1 to 71 is disordered; sequence MTKEEIADKK…SEKKPEPTSA (71 aa). The segment covering 22–48 has biased composition (basic residues); that stretch reads KKSKKHKKDKKDKKEKKDKKHKKHKKE. The segment covering 49-67 has biased composition (basic and acidic residues); sequence KKGEKEVEVPEKESEKKPE. A Q motif motif is present at residues 114–140; it reads LSFDYLSLDSSIQAEISKFPKPTPIQA. The region spanning 143–315 is the Helicase ATP-binding domain; the sequence is WPYLLSGKDV…STFMNNPIKV (173 aa). 156–163 serves as a coordination point for ATP; sequence AETGSGKT. The DEAD box motif lies at 262-265; sequence DEAD. A Helicase C-terminal domain is found at 344-493; that stretch reads KLLELLKKYH…PVPEDLIKFG (150 aa).

It belongs to the DEAD box helicase family. DDX5/DBP2 subfamily.

The protein resides in the nucleus. Its subcellular location is the nucleolus. The enzyme catalyses ATP + H2O = ADP + phosphate + H(+). Functionally, ATP-dependent RNA helicase required for 60S ribosomal subunit synthesis. Involved in efficient pre-rRNA processing, predominantly at site A3, which is necessary for the normal formation of 25S and 5.8S rRNAs. This is ATP-dependent RNA helicase DBP3 (DBP3) from Saccharomyces cerevisiae (strain ATCC 204508 / S288c) (Baker's yeast).